Reading from the N-terminus, the 104-residue chain is Cell division protein FtsL (104 aa).

The Cytoplasmic portion of the chain corresponds to methionine 1–histidine 19. Residues phenylalanine 20–threonine 39 traverse the membrane as a helical segment. Residues threonine 40 to arginine 104 are Periplasmic-facing.

Belongs to the FtsL family. In terms of assembly, part of a complex composed of FtsB, FtsL and FtsQ.

The protein localises to the cell inner membrane. Functionally, essential cell division protein. May link together the upstream cell division proteins, which are predominantly cytoplasmic, with the downstream cell division proteins, which are predominantly periplasmic. The polypeptide is Cell division protein FtsL (Psychromonas ingrahamii (strain DSM 17664 / CCUG 51855 / 37)).